A 470-amino-acid polypeptide reads, in one-letter code: Alpha-1A adrenergic receptor (470 aa).

The Extracellular segment spans residues 1 to 27 (MTPSSVTLNCSNCSHVLAPELNTVKAV). N-linked (GlcNAc...) asparagine glycans are attached at residues Asn9 and Asn12. A helical membrane pass occupies residues 28–51 (VLGMVLGIFILFGVIGNILVILSV). The Cytoplasmic portion of the chain corresponds to 52–64 (VCHRHLQTVTYYF). A helical transmembrane segment spans residues 65–88 (IVNLAVADLLLSSTVLPFSAIFEI). Residues 89 to 99 (LDRWVFGRVFC) lie on the Extracellular side of the membrane. Residues Cys99 and Cys176 are joined by a disulfide bond. Residues 100–122 (NIWAAVDVLCCTASIMSLCVISV) traverse the membrane as a helical segment. Residues 123-143 (DRYIGVSYPLRYPAIMTKRRA) lie on the Cytoplasmic side of the membrane. Residues 144–167 (LLAVMLLWVLSVIISIGPLFGWKE) form a helical membrane-spanning segment. At 168-181 (PAPEDETVCKITEE) the chain is on the extracellular side. Residues 182 to 205 (PGYAIFSAVGSFYLPLAIILAMYC) form a helical membrane-spanning segment. At 206-271 (RVYVVAQKES…FSREKKAAKT (66 aa)) the chain is on the cytoplasmic side. A helical membrane pass occupies residues 272 to 295 (LGIVVGCFVLCWLPFFLVLPIGSI). The Extracellular portion of the chain corresponds to 296-303 (FPAYRPSD). The chain crosses the membrane as a helical span at residues 304-327 (TVFKITFWLGYFNSCINPIIYLCS). At 328 to 470 (NQEFKKAFQS…LSLSEKGESV (143 aa)) the chain is on the cytoplasmic side. Residue Cys343 is the site of S-palmitoyl cysteine attachment. Residues 375 to 416 (GAPCRLSPSSSVALSRTPSSRDSREWRVFSGGPINSGPGPTE) form a disordered region. Over residues 381-392 (SPSSSVALSRTP) the composition is skewed to polar residues.

This sequence belongs to the G-protein coupled receptor 1 family. Adrenergic receptor subfamily. ADRA1A sub-subfamily.

The protein localises to the cell membrane. Functionally, this alpha-adrenergic receptor mediates its action by association with G proteins that activate a phosphatidylinositol-calcium second messenger system. The protein is Alpha-1A adrenergic receptor (adra1a) of Oryzias latipes (Japanese rice fish).